We begin with the raw amino-acid sequence, 202 residues long: Transmembrane 4 L6 family member 4 (202 aa).

Over 1–9 (MCTGGCARC) the chain is Cytoplasmic. A helical membrane pass occupies residues 10–30 (LGGTLIPLAFFGFLANILLFF). Over 31-45 (PGGKVIDDNDHLSQE) the chain is Extracellular. Residues 46–66 (IWFFGGILGSGVLMIFPALVF) form a helical membrane-spanning segment. The Cytoplasmic portion of the chain corresponds to 67–93 (LGLKNNDCCGCCGNEGCGKRFAMFTST). A helical transmembrane segment spans residues 94–114 (IFAVVGFLGAGYSFIISAISI). Over 115 to 158 (NKGPKCLMANSTWGYPFHDGDYLNDEALWNKCREPLNVVPWNLT) the chain is Extracellular. N-linked (GlcNAc...) asparagine glycosylation is found at Asn-124 and Asn-156. A helical transmembrane segment spans residues 159–179 (LFSILLVVGGIQMVLCAIQVV). Topologically, residues 180–202 (NGLLGTLCGDCQCCGCCGGDGPV) are cytoplasmic.

It belongs to the L6 tetraspanin family. N-glycosylated. Glycosylation is required for the growth inhibitory effect. As to expression, jejunum and liver.

The protein localises to the membrane. Its function is as follows. Regulates the adhesive and proliferative status of intestinal epithelial cells. Can mediate density-dependent cell proliferation. The protein is Transmembrane 4 L6 family member 4 (TM4SF4) of Homo sapiens (Human).